A 298-amino-acid chain; its full sequence is Homoserine kinase (298 aa).

92–102 is an ATP binding site; it reads PLARGLGSSAT.

It belongs to the GHMP kinase family. Homoserine kinase subfamily.

It is found in the cytoplasm. It catalyses the reaction L-homoserine + ATP = O-phospho-L-homoserine + ADP + H(+). The protein operates within amino-acid biosynthesis; L-threonine biosynthesis; L-threonine from L-aspartate: step 4/5. Catalyzes the ATP-dependent phosphorylation of L-homoserine to L-homoserine phosphate. The protein is Homoserine kinase (thrB) of Nostoc sp. (strain PCC 7120 / SAG 25.82 / UTEX 2576).